Reading from the N-terminus, the 284-residue chain is NAD kinase (284 aa).

D70 (proton acceptor) is an active-site residue. Residues 70 to 71, 139 to 140, K167, D169, L177, 180 to 185, and Q236 each bind NAD(+); these read DG, NE, and TAYNLS.

The protein belongs to the NAD kinase family. The cofactor is a divalent metal cation.

The protein localises to the cytoplasm. It catalyses the reaction NAD(+) + ATP = ADP + NADP(+) + H(+). Functionally, involved in the regulation of the intracellular balance of NAD and NADP, and is a key enzyme in the biosynthesis of NADP. Catalyzes specifically the phosphorylation on 2'-hydroxyl of the adenosine moiety of NAD to yield NADP. The chain is NAD kinase from Helicobacter pylori (strain HPAG1).